Consider the following 173-residue polypeptide: NADH-ubiquinone oxidoreductase chain 6 (173 aa).

Helical transmembrane passes span 1–21 (MTYFVLFLGLCFVLGGLAVAS), 27–47 (YGVVGLVLASIAGCGWLLSLG), 48–68 (VSFVSLVLFMVYLGGMLVVFV), 87–107 (VVGYGVSLITVLVVGVVVGGF), 113–133 (FGVITVDSVGMFSVRLDFGGV), and 139–159 (CGVGMFLVAGWGLLLTLFVVL).

It belongs to the complex I subunit 6 family.

It is found in the mitochondrion membrane. The catalysed reaction is a ubiquinone + NADH + 5 H(+)(in) = a ubiquinol + NAD(+) + 4 H(+)(out). Core subunit of the mitochondrial membrane respiratory chain NADH dehydrogenase (Complex I) that is believed to belong to the minimal assembly required for catalysis. Complex I functions in the transfer of electrons from NADH to the respiratory chain. The immediate electron acceptor for the enzyme is believed to be ubiquinone. In Alle alle (Dovekie), this protein is NADH-ubiquinone oxidoreductase chain 6 (MT-ND6).